Consider the following 264-residue polypeptide: MGRLTLTKLQKMKRQGEKITMLTAYDASFAALLEAAGVEVLLVGDSLGMVIQGQESTLSVTMDDMVYHCRNVSRGSQCTFILSDMPFMSYATPNQAMDNAARLMREGGAQMVKLEGGRLLGEIVEHLTARGIPVCAHLGLLPQSVHRIGGYRVQGREEISARRIQEDAMILQEAGADMLILECVPARLGSKITDALKIPVISCGAGPYCDGQVLVLYDMLGISPGKSPSFSRNFLEGTSNIPNAIQAYVSAVKKNEFPLLELSY.

Mg(2+)-binding residues include aspartate 45 and aspartate 84. 3-methyl-2-oxobutanoate contacts are provided by residues 45–46 (DS), aspartate 84, and lysine 113. Glutamate 115 provides a ligand contact to Mg(2+). The Proton acceptor role is filled by glutamate 182.

It belongs to the PanB family. Homodecamer; pentamer of dimers. It depends on Mg(2+) as a cofactor.

The protein resides in the cytoplasm. It catalyses the reaction 3-methyl-2-oxobutanoate + (6R)-5,10-methylene-5,6,7,8-tetrahydrofolate + H2O = 2-dehydropantoate + (6S)-5,6,7,8-tetrahydrofolate. The protein operates within cofactor biosynthesis; (R)-pantothenate biosynthesis; (R)-pantoate from 3-methyl-2-oxobutanoate: step 1/2. Catalyzes the reversible reaction in which hydroxymethyl group from 5,10-methylenetetrahydrofolate is transferred onto alpha-ketoisovalerate to form ketopantoate. The chain is 3-methyl-2-oxobutanoate hydroxymethyltransferase from Nitrosococcus oceani (strain ATCC 19707 / BCRC 17464 / JCM 30415 / NCIMB 11848 / C-107).